A 151-amino-acid polypeptide reads, in one-letter code: UPF0178 protein Caul_3070 (151 aa).

The protein belongs to the UPF0178 family.

This Caulobacter sp. (strain K31) protein is UPF0178 protein Caul_3070.